The sequence spans 580 residues: Cleavage stimulation factor subunit 2 (580 aa).

A Phosphoserine modification is found at serine 14. The RRM domain maps to arginine 16–serine 94. Residues alanine 108–alanine 248 are interactions with CSTF3 and SYMPK. Lysine 189 is covalently cross-linked (Glycyl lysine isopeptide (Lys-Gly) (interchain with G-Cter in SUMO2)). Residue arginine 308 is modified to Omega-N-methylarginine. Disordered regions lie at residues leucine 311–glycine 331 and leucine 347–aspartate 414. 2 stretches are compositionally biased toward basic and acidic residues: residues proline 363–arginine 376 and arginine 405–aspartate 414. The stretch at leucine 413–glycine 417 is one 1; approximate repeat. Residues leucine 413–glycine 472 are 12 X 5 AA tandem repeats of M-E-A-R-[AG]. A run of 2 repeats spans residues methionine 418 to alanine 422 and methionine 423 to glycine 427. A 4; approximate repeat occupies leucine 428–glycine 432. A 5; approximate repeat occupies leucine 433–alanine 437. Repeat copies occupy residues methionine 438–alanine 442, methionine 443–alanine 447, methionine 448–alanine 452, methionine 453–alanine 457, methionine 458–alanine 462, and methionine 463–glycine 467. One copy of the 12; approximate repeat lies at methionine 468 to glycine 472. Omega-N-methylarginine occurs at positions 471 and 478. The segment at methionine 512–glutamine 536 is disordered. Positions methionine 517 to proline 580 are interaction with RPO2TC1. Phosphoserine occurs at positions 521 and 527.

As to quaternary structure, the CSTF complex is composed of CSTF1 (50 kDa subunit), CSTF2 (64 kDa subunit) and CSTF3 (77 kDa subunit). CSTF2 directly interacts with CSTF3, SYMPK and RPO2TC1. Interacts with HSF1 in heat-stressed cells. Interacts with CPSF2, CPSF3 and FIP1L1. Interacts with DDX1. As to expression, expressed in most somatic cell types (at protein level). Highly expressed in testis, except in meiotic spermatocytes.

It localises to the nucleus. In terms of biological role, one of the multiple factors required for polyadenylation and 3'-end cleavage of mammalian pre-mRNAs. This subunit is directly involved in the binding to pre-mRNAs. The polypeptide is Cleavage stimulation factor subunit 2 (Cstf2) (Mus musculus (Mouse)).